The chain runs to 208 residues: Uracil phosphoribosyltransferase (208 aa).

5-phospho-alpha-D-ribose 1-diphosphate-binding positions include Arg78, Arg103, and 130 to 138 (DPMLATGHS). Uracil contacts are provided by residues Ile193 and 198–200 (GDA). Residue Asp199 participates in 5-phospho-alpha-D-ribose 1-diphosphate binding.

Belongs to the UPRTase family. The cofactor is Mg(2+).

The catalysed reaction is UMP + diphosphate = 5-phospho-alpha-D-ribose 1-diphosphate + uracil. It participates in pyrimidine metabolism; UMP biosynthesis via salvage pathway; UMP from uracil: step 1/1. With respect to regulation, allosterically activated by GTP. In terms of biological role, catalyzes the conversion of uracil and 5-phospho-alpha-D-ribose 1-diphosphate (PRPP) to UMP and diphosphate. This Brucella anthropi (strain ATCC 49188 / DSM 6882 / CCUG 24695 / JCM 21032 / LMG 3331 / NBRC 15819 / NCTC 12168 / Alc 37) (Ochrobactrum anthropi) protein is Uracil phosphoribosyltransferase.